The following is a 200-amino-acid chain: LHFPL tetraspan subfamily member 6 protein (200 aa).

A signal peptide spans 1–23 (MASSLTCTGVIWALLSFLSAATS). 3 helical membrane-spanning segments follow: residues 84 to 104 (ICTIVTGLGCGLLLLVALTAL), 123 to 143 (GIQFLGGLLIGAGCALYPLGW), and 166 to 186 (IGWAYYCTGAGAAAAMLLCTW).

It belongs to the LHFP family.

The protein resides in the membrane. In Rattus norvegicus (Rat), this protein is LHFPL tetraspan subfamily member 6 protein.